Reading from the N-terminus, the 642-residue chain is Threonine--tRNA ligase (642 aa).

The region spanning 1–61 (MPVITLPDGS…ENDATLSIIT (61 aa)) is the TGS domain. A catalytic region spans residues 243-534 (DHRKIGKQLD…LTEEFAGFFP (292 aa)). Zn(2+) is bound by residues Cys334, His385, and His511.

It belongs to the class-II aminoacyl-tRNA synthetase family. In terms of assembly, homodimer. Zn(2+) serves as cofactor.

Its subcellular location is the cytoplasm. It carries out the reaction tRNA(Thr) + L-threonine + ATP = L-threonyl-tRNA(Thr) + AMP + diphosphate + H(+). Its function is as follows. Catalyzes the attachment of threonine to tRNA(Thr) in a two-step reaction: L-threonine is first activated by ATP to form Thr-AMP and then transferred to the acceptor end of tRNA(Thr). Also edits incorrectly charged L-seryl-tRNA(Thr). This Salmonella heidelberg (strain SL476) protein is Threonine--tRNA ligase.